The primary structure comprises 347 residues: S-adenosylmethionine:tRNA ribosyltransferase-isomerase (347 aa).

The protein belongs to the QueA family. As to quaternary structure, monomer.

The protein localises to the cytoplasm. The enzyme catalyses 7-aminomethyl-7-carbaguanosine(34) in tRNA + S-adenosyl-L-methionine = epoxyqueuosine(34) in tRNA + adenine + L-methionine + 2 H(+). Its pathway is tRNA modification; tRNA-queuosine biosynthesis. In terms of biological role, transfers and isomerizes the ribose moiety from AdoMet to the 7-aminomethyl group of 7-deazaguanine (preQ1-tRNA) to give epoxyqueuosine (oQ-tRNA). The protein is S-adenosylmethionine:tRNA ribosyltransferase-isomerase of Pseudomonas aeruginosa (strain ATCC 15692 / DSM 22644 / CIP 104116 / JCM 14847 / LMG 12228 / 1C / PRS 101 / PAO1).